Here is a 384-residue protein sequence, read N- to C-terminus: Chaperone protein DnaJ (384 aa).

The J domain occupies 5 to 70 (DYYEVLGVSK…DKKAAYDRYG (66 aa)). The disordered stretch occupies residues 16-47 (ASSDDIKKGYRRKAKELHPDRNKDDPNAEAQF). Over residues 31–47 (ELHPDRNKDDPNAEAQF) the composition is skewed to basic and acidic residues. The CR-type zinc finger occupies 143-221 (GLQKTINVPT…CQGAGRVEKD (79 aa)). Zn(2+) contacts are provided by cysteine 156, cysteine 159, cysteine 173, cysteine 176, cysteine 195, cysteine 198, cysteine 209, and cysteine 212. CXXCXGXG motif repeat units follow at residues 156–163 (CKTCNGSG), 173–180 (CPTCSGMG), 195–202 (CPTCSGLG), and 209–216 (CKSCQGAG).

This sequence belongs to the DnaJ family. Homodimer. Zn(2+) serves as cofactor.

The protein resides in the cytoplasm. In terms of biological role, participates actively in the response to hyperosmotic and heat shock by preventing the aggregation of stress-denatured proteins and by disaggregating proteins, also in an autonomous, DnaK-independent fashion. Unfolded proteins bind initially to DnaJ; upon interaction with the DnaJ-bound protein, DnaK hydrolyzes its bound ATP, resulting in the formation of a stable complex. GrpE releases ADP from DnaK; ATP binding to DnaK triggers the release of the substrate protein, thus completing the reaction cycle. Several rounds of ATP-dependent interactions between DnaJ, DnaK and GrpE are required for fully efficient folding. Also involved, together with DnaK and GrpE, in the DNA replication of plasmids through activation of initiation proteins. In Roseobacter denitrificans (strain ATCC 33942 / OCh 114) (Erythrobacter sp. (strain OCh 114)), this protein is Chaperone protein DnaJ.